Reading from the N-terminus, the 548-residue chain is Alpha-humulene synthase (548 aa).

3 residues coordinate Mg(2+): aspartate 302, aspartate 306, and glutamate 453. The DDXXD motif signature appears at 302-306 (DDIYD).

It belongs to the terpene synthase family. As to expression, mostly expressed in rhizomes.

It catalyses the reaction (2E,6E)-farnesyl diphosphate = alpha-humulene + diphosphate. Functionally, catalyzes the formation of alpha-humulene in the first step of zerumbone biosynthesis, a highly promising multi-anticancer agent. Also mediates formation of beta-caryophyllene at a much lower level. The chain is Alpha-humulene synthase (ZSS1) from Zingiber zerumbet (Shampoo ginger).